A 253-amino-acid polypeptide reads, in one-letter code: Small ribosomal subunit protein uS2 (253 aa).

The protein belongs to the universal ribosomal protein uS2 family.

The polypeptide is Small ribosomal subunit protein uS2 (Parvibaculum lavamentivorans (strain DS-1 / DSM 13023 / NCIMB 13966)).